A 475-amino-acid polypeptide reads, in one-letter code: Coagulation factor X (475 aa).

Positions 1 to 20 are cleaved as a signal peptide; sequence MAGRLLLLLLCAALPDELRA. Residues 21–40 constitute a propeptide that is removed on maturation; it reads EGGVFIKKESADKFLERTKR. Positions 41 to 85 constitute a Gla domain; the sequence is ANSFLEEMKQGNIERECNEERCSKEEAREAFEDNEKTEEFWNIYV. 11 positions are modified to 4-carboxyglutamate: E46, E47, E54, E56, E59, E60, E65, E66, E69, E72, and E79. C57 and C62 are disulfide-bonded. One can recognise an EGF-like 1; calcium-binding domain in the interval 86–122; sequence DGDQCSSNPCHYGGQCKDGLGSYTCSCLDGYQGKNCE. 11 disulfides stabilise this stretch: C90–C101, C95–C110, C112–C121, C129–C140, C136–C152, C154–C167, C175–C348, C247–C252, C267–C283, C396–C410, and C421–C449. The residue at position 103 (D103) is a (3R)-3-hydroxyaspartate. The EGF-like 2 domain maps to 125–168; the sequence is IPKYCKINNGDCEQFCSIKKSVQKDVVCSCTSGYELAEDGKQCV. Positions 186–240 are cleaved as a propeptide — activation peptide; that stretch reads SVILPTNSNTNATSDQDVPSTNGSILEEVFTTTTESPTPPPRNGSSITDPNVDTR. N196, N207, and N228 each carry an N-linked (GlcNAc...) asparagine glycan. Positions 216–237 are disordered; the sequence is TTTTESPTPPPRNGSSITDPNV. The 233-residue stretch at 241 to 473 folds into the Peptidase S1 domain; that stretch reads IVGGDECRPG…FLRWVRTVMR (233 aa). H282 (charge relay system) is an active-site residue. N-linked (GlcNAc...) asparagine glycosylation is present at N285. Catalysis depends on D328, which acts as the Charge relay system. The active-site Charge relay system is S425.

It belongs to the peptidase S1 family. The two chains are formed from a single-chain precursor by the excision of two Arg residues and are held together by 1 or more disulfide bonds. The vitamin K-dependent, enzymatic carboxylation of some glutamate residues allows the modified protein to bind calcium. In terms of processing, the activation peptide is cleaved by factor IXa (in the intrinsic pathway), or by factor VIIa (in the extrinsic pathway). Post-translationally, the iron and 2-oxoglutarate dependent 3-hydroxylation of aspartate and asparagine is (R) stereospecific within EGF domains. In terms of tissue distribution, liver and chorioallantoic membrane.

It is found in the secreted. It catalyses the reaction Selective cleavage of Arg-|-Thr and then Arg-|-Ile bonds in prothrombin to form thrombin.. Factor Xa is a vitamin K-dependent glycoprotein that converts prothrombin to thrombin in the presence of factor Va, calcium and phospholipid during blood clotting. VAP cleaves the fusion proteins of Sendai virus, NDV, and influenza virus a at a specific single arginine-containing site, and plays a key role in the viral spreading in the allantoic sac. The protein is Coagulation factor X (F10) of Gallus gallus (Chicken).